We begin with the raw amino-acid sequence, 148 residues long: Prefoldin subunit 2 (148 aa).

Positions 87–114 (KDGLEEVVRKLYETLEKKKKDLTEFEAK) form a coiled coil. A compositionally biased stretch (basic and acidic residues) spans 122–134 (QEDNKEGGNKKEG). The tract at residues 122–148 (QEDNKEGGNKKEGNAQGVLVGAASSSQ) is disordered.

It belongs to the prefoldin subunit beta family. Heterohexamer of two PFD-alpha type and four PFD-beta type subunits forming prefoldin co-chaperone complex. Interacts with LSM8, a specific subunit of the LSM2-8 complex, which is a core component of the spliceosome.

The protein resides in the cytoplasm. It is found in the nucleus. Its function is as follows. Binds specifically to cytosolic chaperonin (c-CPN) and transfers target proteins to it. Binds to nascent polypeptide chain and promotes folding in an environment in which there are many competing pathways for nonnative proteins. Together with other chaperonins, contribute to the regulation of gene expression by modulating the spliceosome function on pre-mRNA splicing post-transcriptionally by acting as a co-chaperone of Hsp90 to control levels of LSM8. Required for microtubules (MTs) organization and dynamicity. Involved in the process leading to microtubules dissociation in response to gibberellic acid (GA) probably due to the DELLA proteins-mediated translocation of the prefoldin co-chaperone complex from the cytoplasm to the nucleus. This is Prefoldin subunit 2 from Arabidopsis thaliana (Mouse-ear cress).